The primary structure comprises 901 residues: Flowering time control protein FPA (901 aa).

RRM domains are found at residues 18 to 90 (NNLW…YARP), 95 to 166 (KSLW…FLRS), and 206 to 281 (KVLW…YSND). A disordered region spans residues 343–416 (VGKEPNWRRP…SVDGFTPMGV (74 aa)). Residues 441-537 (WRGMIAKGGT…DDGTTLFLVP (97 aa)) form the SPOC domain. The segment at 655-736 (SQPAAPESHQ…YPPASNNPNY (82 aa)) is disordered. Composition is skewed to polar residues over residues 664–682 (QPMS…SNGL) and 700–716 (HDAS…QYTP).

It belongs to the RRM Spen family. Expressed in roots, leaves, stems and flowers. Highest expression in flower stems and meristematic regions.

The protein localises to the nucleus. Functionally, plays a role in the regulation of flowering time in the autonomous flowering pathway by decreasing FLOWERING LOCUS C mRNA levels. Required for RNA-mediated chromatin silencing of a range of loci in the genome. Cotranscriptionally recognizes aberrant RNA and marks it for silencing. Controls alternative cleavage and polyadenylation on pre-mRNAs and antisense RNAs. Acts redundantly with FCA to prevent the expression of distally polyadenylated antisense RNAs at the FLC locus. The polypeptide is Flowering time control protein FPA (FPA) (Arabidopsis thaliana (Mouse-ear cress)).